The following is a 248-amino-acid chain: MFQKVEGIVIRTTDYGETNKIVTIFSREFGKISVMARGAKKPKSRLASISQLMTHGHFLIQMGSGLGTLQQGEMISSMKEIREDIFLTAYASFIVELTDKATEDKKNNPYLFEMLYQTLHYMCDGVDPEVLSLIYQTKMLPVLGMHPYFDTCAICHQETDFVAFSVREGGFLCFRHAEQDPYRIPVGEAVHKLLRLFYHFDLGRLGNVSVKDETKRQIRTVLNTYYDEYCGIYLKSRRFLEQLDKFQI.

Belongs to the RecO family.

Involved in DNA repair and RecF pathway recombination. The polypeptide is DNA repair protein RecO (Bacillus cytotoxicus (strain DSM 22905 / CIP 110041 / 391-98 / NVH 391-98)).